The chain runs to 121 residues: NAD(P)H-quinone oxidoreductase subunit M (121 aa).

Belongs to the complex I NdhM subunit family. In terms of assembly, NDH-1 can be composed of about 15 different subunits; different subcomplexes with different compositions have been identified which probably have different functions.

The protein localises to the cellular thylakoid membrane. It carries out the reaction a plastoquinone + NADH + (n+1) H(+)(in) = a plastoquinol + NAD(+) + n H(+)(out). It catalyses the reaction a plastoquinone + NADPH + (n+1) H(+)(in) = a plastoquinol + NADP(+) + n H(+)(out). NDH-1 shuttles electrons from an unknown electron donor, via FMN and iron-sulfur (Fe-S) centers, to quinones in the respiratory and/or the photosynthetic chain. The immediate electron acceptor for the enzyme in this species is believed to be plastoquinone. Couples the redox reaction to proton translocation, and thus conserves the redox energy in a proton gradient. Cyanobacterial NDH-1 also plays a role in inorganic carbon-concentration. This Nostoc punctiforme (strain ATCC 29133 / PCC 73102) protein is NAD(P)H-quinone oxidoreductase subunit M.